Reading from the N-terminus, the 245-residue chain is 1-(5-phosphoribosyl)-5-[(5-phosphoribosylamino)methylideneamino] imidazole-4-carboxamide isomerase (245 aa).

Asp-7 acts as the Proton acceptor in catalysis. The active-site Proton donor is the Asp-129.

Belongs to the HisA/HisF family.

The protein resides in the cytoplasm. The enzyme catalyses 1-(5-phospho-beta-D-ribosyl)-5-[(5-phospho-beta-D-ribosylamino)methylideneamino]imidazole-4-carboxamide = 5-[(5-phospho-1-deoxy-D-ribulos-1-ylimino)methylamino]-1-(5-phospho-beta-D-ribosyl)imidazole-4-carboxamide. Its pathway is amino-acid biosynthesis; L-histidine biosynthesis; L-histidine from 5-phospho-alpha-D-ribose 1-diphosphate: step 4/9. The sequence is that of 1-(5-phosphoribosyl)-5-[(5-phosphoribosylamino)methylideneamino] imidazole-4-carboxamide isomerase from Enterobacter sp. (strain 638).